The following is a 406-amino-acid chain: Phosphorylase b kinase gamma catalytic chain, liver/testis isoform (406 aa).

A Protein kinase domain is found at 24–291 (YDPKDVIGRG…AEQALQHPFF (268 aa)). Residues 30–38 (IGRGVSSVV) and K53 contribute to the ATP site. The Proton acceptor role is filled by D153. The tract at residues 306-330 (QRFRVAVWTVLAAGRVALSAHRIRP) is calmodulin-binding (domain-N). The segment at 346 to 370 (VRRLIDNCAFRLYGHWVKKGEQQNR) is calmodulin-binding (domain-C).

The protein belongs to the protein kinase superfamily. CAMK Ser/Thr protein kinase family. Hexadecamer of 4 heterotetramers, each composed of alpha, beta, gamma, and delta subunits. Alpha (PHKA1 or PHKA2) and beta (PHKB) are regulatory subunits, gamma (PHKG1 or PHKG2) is the catalytic subunit, and delta is calmodulin.

The catalysed reaction is 2 ATP + phosphorylase b = 2 ADP + phosphorylase a.. Catalytic subunit of the phosphorylase b kinase (PHK), which mediates the neural and hormonal regulation of glycogen breakdown (glycogenolysis) by phosphorylating and thereby activating glycogen phosphorylase. May regulate glycogeneolysis in the testis. In vitro, phosphorylates PYGM. The sequence is that of Phosphorylase b kinase gamma catalytic chain, liver/testis isoform (PHKG2) from Bos taurus (Bovine).